Here is a 115-residue protein sequence, read N- to C-terminus: DNA-binding protein APE_1087b (115 aa).

It belongs to the PDCD5 family.

The polypeptide is DNA-binding protein APE_1087b (Aeropyrum pernix (strain ATCC 700893 / DSM 11879 / JCM 9820 / NBRC 100138 / K1)).